The following is a 2439-amino-acid chain: Protein roller-3 (2439 aa).

The N-terminal stretch at 1-26 (MLDFPRFSLFLFLLFSSFLFSSFVHA) is a signal peptide. Residues 27 to 1851 (ATVFSSSLKT…EEEKGGILPY (1825 aa)) are Extracellular-facing. Residues Asn64, Asn182, Asn334, Asn394, Asn496, Asn533, Asn657, Asn766, Asn868, Asn1003, Asn1036, Asn1090, and Asn1261 are each glycosylated (N-linked (GlcNAc...) asparagine). In terms of domain architecture, Fibronectin type-III 1 spans 618–720 (KPRIVAVSSI…STSNTALPDL (103 aa)). 4 Fibronectin type-III domains span residues 1403-1503 (SKGI…TGFG), 1507-1628 (APRD…TLDV), 1629-1732 (PGTL…IQQA), and 1738-1843 (VPTA…EKEE). Residues Asn1567, Asn1636, Asn1677, and Asn1779 are each glycosylated (N-linked (GlcNAc...) asparagine). Residues 1852–1872 (FLGISIILLLAAMILVGCFWL) form a helical membrane-spanning segment. Over 1873–2439 (KSRRRQQMKK…GGTCRSVSQV (567 aa)) the chain is Cytoplasmic. The region spanning 1928-2199 (VEIVRHISDC…ATILKIFETC (272 aa)) is the Protein kinase domain. Residues 1934–1942 (ISDCSYGSV) and Lys1963 contribute to the ATP site. Disordered regions lie at residues 2214 to 2277 (NEGS…RPAT), 2315 to 2348 (SQRPLSIHSEDTESTDFGGATSSMHSPSSSNRTN), and 2412 to 2439 (HLRAPTGQPPTRVNRNSSGGTCRSVSQV). Polar residues-rich tracts occupy residues 2216-2233 (GSDNINFNASQDSTSSRE), 2334-2347 (ATSSMHSPSSSNRT), and 2420-2439 (PPTRVNRNSSGGTCRSVSQV).

It localises to the membrane. In terms of biological role, involved in larval development and locomotion. The protein is Protein roller-3 of Caenorhabditis briggsae.